The following is a 1240-amino-acid chain: RNA-directed RNA polymerase VP2 (1240 aa).

The 249-residue stretch at leucine 516 to isoleucine 764 folds into the RdRp catalytic domain.

Belongs to the reoviridae RNA-directed RNA polymerase family.

The protein localises to the virion. It carries out the reaction RNA(n) + a ribonucleoside 5'-triphosphate = RNA(n+1) + diphosphate. Its function is as follows. RNA-directed RNA polymerase that is involved in transcription and genome replication. Following infection, it catalyzes the synthesis of fully conservative plus strands. After core assembly, which consists in recruitment of one capped plus-strand for each genomic segments and polymerase complexes, the polymerase switches mode and catalyzes the synthesis of complementary minus-strands. This chain is RNA-directed RNA polymerase VP2 (S2), found in Oncorhynchus keta (Chum salmon).